The chain runs to 181 residues: ADP-ribosylation factor 1 (181 aa).

Residue Gly-2 is the site of N-myristoyl glycine attachment. Residues 24 to 31, 67 to 71, and 126 to 129 contribute to the GTP site; these read GLDAAGKT, DVGGQ, and NKQD.

The protein belongs to the small GTPase superfamily. Arf family.

It localises to the golgi apparatus. The catalysed reaction is GTP + H2O = GDP + phosphate + H(+). Functionally, GTP-binding protein involved in protein trafficking; may modulate vesicle budding and uncoating within the Golgi apparatus. The sequence is that of ADP-ribosylation factor 1 (ARF1) from Daucus carota (Wild carrot).